The primary structure comprises 349 residues: Dihydroorotate dehydrogenase (quinone) (349 aa).

Residues Ala67 to Lys71 and Thr91 contribute to the FMN site. A substrate-binding site is contributed by Lys71. Asn116 to Phe120 is a substrate binding site. FMN-binding residues include Asn147 and Asn180. Asn180 contacts substrate. The Nucleophile role is filled by Ser183. Asn185 is a substrate binding site. 2 residues coordinate FMN: Lys225 and Thr253. Substrate is bound at residue Asn254–Thr255. FMN is bound by residues Gly276, Gly305, and Tyr326–Thr327.

This sequence belongs to the dihydroorotate dehydrogenase family. Type 2 subfamily. Monomer. It depends on FMN as a cofactor.

Its subcellular location is the cell membrane. The enzyme catalyses (S)-dihydroorotate + a quinone = orotate + a quinol. The protein operates within pyrimidine metabolism; UMP biosynthesis via de novo pathway; orotate from (S)-dihydroorotate (quinone route): step 1/1. Catalyzes the conversion of dihydroorotate to orotate with quinone as electron acceptor. The sequence is that of Dihydroorotate dehydrogenase (quinone) from Bordetella parapertussis (strain 12822 / ATCC BAA-587 / NCTC 13253).